The sequence spans 269 residues: 3-methyl-2-oxobutanoate hydroxymethyltransferase (269 aa).

2 residues coordinate Mg(2+): aspartate 50 and aspartate 89. Residues aspartate 50–serine 51, aspartate 89, and lysine 119 each bind 3-methyl-2-oxobutanoate. Glutamate 121 is a binding site for Mg(2+). The active-site Proton acceptor is glutamate 187.

Belongs to the PanB family. As to quaternary structure, homodecamer; pentamer of dimers. Requires Mg(2+) as cofactor.

It is found in the cytoplasm. The catalysed reaction is 3-methyl-2-oxobutanoate + (6R)-5,10-methylene-5,6,7,8-tetrahydrofolate + H2O = 2-dehydropantoate + (6S)-5,6,7,8-tetrahydrofolate. It functions in the pathway cofactor biosynthesis; (R)-pantothenate biosynthesis; (R)-pantoate from 3-methyl-2-oxobutanoate: step 1/2. In terms of biological role, catalyzes the reversible reaction in which hydroxymethyl group from 5,10-methylenetetrahydrofolate is transferred onto alpha-ketoisovalerate to form ketopantoate. This is 3-methyl-2-oxobutanoate hydroxymethyltransferase from Corynebacterium efficiens (strain DSM 44549 / YS-314 / AJ 12310 / JCM 11189 / NBRC 100395).